Reading from the N-terminus, the 465-residue chain is Adenosine 3'-phospho 5'-phosphosulfate transporter 1 (465 aa).

Helical transmembrane passes span 13 to 33 (LVIC…SDLL), 61 to 81 (FLKL…GFLI), 142 to 162 (AVQL…WGVL), 185 to 205 (QFLV…YLQW), 270 to 290 (SYEY…MSGS), 299 to 319 (VTTL…SFTA), 339 to 359 (GVNL…GGFM), 370 to 390 (KFVF…LFIY), 391 to 407 (HTID…IMTL), and 424 to 444 (ISLL…LRVY).

Belongs to the nucleotide-sugar transporter family. SLC35B subfamily. As to expression, expressed throughout embryogenesis. During oogenesis, it is expressed strongly in the nurse cells of the germline. Maternally expressed at the syncytial blastoderm stage. Zygotically expressed, from after germ-band elongation in the invaginating salivary gland placodes. Remains expressed predominantly in this tissue throughout embryogenesis, but low-level expression may also be present throughout the embryo.

The protein resides in the golgi apparatus membrane. In terms of biological role, mediates the transport of adenosine 3'-phospho 5'-phosphosulfate (PAPS), from cytosol into Golgi. PAPS is a universal sulfuryl donor for sulfation events that take place in the Golgi. Required for the dorsoventral patterning, suggesting that it mediates the transport of the sulfate donor required for the sulfotransferase activity of pip (pipe). This is Adenosine 3'-phospho 5'-phosphosulfate transporter 1 (sll) from Drosophila melanogaster (Fruit fly).